Reading from the N-terminus, the 556-residue chain is Glutamine--tRNA ligase (556 aa).

Positions 35-45 (PEPNGYLHIGH) match the 'HIGH' region motif. ATP-binding positions include 36–38 (EPN) and 42–48 (HIGHAKS). Residues Asp68 and Tyr213 each contribute to the L-glutamine site. ATP contacts are provided by residues Thr232 and 262 to 263 (RL). The short motif at 269 to 273 (VTSKR) is the 'KMSKS' region element.

It belongs to the class-I aminoacyl-tRNA synthetase family. As to quaternary structure, monomer.

Its subcellular location is the cytoplasm. It carries out the reaction tRNA(Gln) + L-glutamine + ATP = L-glutaminyl-tRNA(Gln) + AMP + diphosphate. This is Glutamine--tRNA ligase from Pseudomonas aeruginosa (strain LESB58).